We begin with the raw amino-acid sequence, 381 residues long: MKAPIEVSPLAWLDAVEQQRRAAGLRRSLRPRPPVATELDLASNDYLGLSQHPDVIDGGVAALRMWGAGATGSRLVTGDTELHQQFESELADYVGAASGLLFSSGYAANLGAVVGLSGRGALVVSDAYSHASLVDACRLSRARVVVTPHRDVDAVRAALQDRDEERAVVITESVFSTDGALAPLRELHEVCRRHRALLIVDEAHGLGVRGGGRGLVFEAGLAGAPDVVMTTTLSKALGSQGGAVLGPAAVRAHLIDAARTFIFDTGLAPAAVGAARAALGVLRAEPWRSGAVLRHAGVLAEVCRVREAPQSAVVSVILGDPDVAVAAATACLDGGVRVGCFRPPTVPAGTSRLRLTARASLDDAELEVARRVLTDVLAGLG.

Arg27 is a binding site for substrate. 105–106 (GY) serves as a coordination point for pyridoxal 5'-phosphate. His130 contributes to the substrate binding site. Pyridoxal 5'-phosphate is bound by residues Ser176, 201-204 (DEAH), and 232-235 (TLSK). Lys235 is subject to N6-(pyridoxal phosphate)lysine. A substrate-binding site is contributed by Thr345.

Belongs to the class-II pyridoxal-phosphate-dependent aminotransferase family. BioF subfamily. Homodimer. Pyridoxal 5'-phosphate is required as a cofactor.

It catalyses the reaction 6-carboxyhexanoyl-[ACP] + L-alanine + H(+) = (8S)-8-amino-7-oxononanoate + holo-[ACP] + CO2. It participates in cofactor biosynthesis; biotin biosynthesis. Catalyzes the decarboxylative condensation of pimeloyl-[acyl-carrier protein] and L-alanine to produce 8-amino-7-oxononanoate (AON), [acyl-carrier protein], and carbon dioxide. The polypeptide is 8-amino-7-oxononanoate synthase (Mycolicibacterium paratuberculosis (strain ATCC BAA-968 / K-10) (Mycobacterium paratuberculosis)).